Reading from the N-terminus, the 240-residue chain is MATLFIADLHLCVEEPAITAGFLRFLAGEARKADALYILGDLFEAWIGDDEPNPLHRQMAAAIKAVSDSGVPCYFIHGNRDFLLGKRFARESGMTLLPEEKVLELYGRRVLIMHGDTLCTDDAGYQAFRAKVHKPWLQMLFLALPLFVRKRIAARMRANSKEANSSKSLAIMDVNQNAVVSAMEKHQVQWLIHGHTHRPAVHELIANQQPAFRVVLGAWHTEGSMVKVTADDVELIHFPF.

Mn(2+) is bound by residues aspartate 8, histidine 10, aspartate 41, asparagine 79, and histidine 114. Residue 79–80 (NR) coordinates substrate. Substrate-binding residues include aspartate 122, serine 160, asparagine 164, lysine 167, and histidine 195. Mn(2+) is bound by residues histidine 195 and histidine 197.

This sequence belongs to the LpxH family. Mn(2+) is required as a cofactor.

The protein localises to the cell inner membrane. It catalyses the reaction UDP-2-N,3-O-bis[(3R)-3-hydroxytetradecanoyl]-alpha-D-glucosamine + H2O = 2-N,3-O-bis[(3R)-3-hydroxytetradecanoyl]-alpha-D-glucosaminyl 1-phosphate + UMP + 2 H(+). It functions in the pathway glycolipid biosynthesis; lipid IV(A) biosynthesis; lipid IV(A) from (3R)-3-hydroxytetradecanoyl-[acyl-carrier-protein] and UDP-N-acetyl-alpha-D-glucosamine: step 4/6. In terms of biological role, hydrolyzes the pyrophosphate bond of UDP-2,3-diacylglucosamine to yield 2,3-diacylglucosamine 1-phosphate (lipid X) and UMP by catalyzing the attack of water at the alpha-P atom. Involved in the biosynthesis of lipid A, a phosphorylated glycolipid that anchors the lipopolysaccharide to the outer membrane of the cell. The polypeptide is UDP-2,3-diacylglucosamine hydrolase (Shigella sonnei (strain Ss046)).